We begin with the raw amino-acid sequence, 378 residues long: MDPGDDWLVESLRLYQDFYAFDLSGATRVLEWIDDKGVFVAGYESLKKNEILHLKLPLRLSVKENKGLFPERDFKVRHGGFSDRSIFDLKHVPHTRLLVTSGLPGCYLQVWQVAEDSDVIKAVSTIAVHEKEESLWPRVAVFSTLAPGVLHGARLRSLQVVDLESRKTTYTSDVSDSEELSSLQVLDADTFAFCCASGRLGLVDTRQKWAPLENRSPGPGSGGERWCAEVGSWGQGPGPSIASLGSDGRLCLLDPRDLCHPVSSVQCPVSVPSPDPELLRVTWAPGLKNCLAISGFDGTVQVYDATSWDGTRSQDGTRSQVEPLFTHRGHIFLDGNGMDPAPLVTTHTWHPCRPRTLLSATNDASLHVWDWVDLCAPR.

WD repeat units lie at residues 73 to 113, 121 to 163, 167 to 205, 214 to 255, 266 to 305, and 322 to 371; these read DFKV…VWQV, KAVS…VVDL, KTTY…LVDT, NRSP…LLDP, QCPV…VYDA, and EPLF…VWDW.

Belongs to the WD repeat WDR73 family. As to quaternary structure, interacts with INTS9 and INTS11; the interaction is direct. Part of the multiprotein complex composed of BRAT1, WDR73, as well as integrator complex subunits INTS9 and INTS11. As to expression, expressed in kidney and brain. In the kidney, expressed in glomeruli, most probably in podocytes, and in tubules (at protein level). In the brain, expressed in the cerebellum, with high levels in Purkinje cells and their projecting axons, in the deep cerebellar nuclei and in pyramidal neurons of the cerebral cortex (at protein level). In the white matter, mainly present in astrocytes, but not in oligodendrocytes (at protein level). Also highly expressed in endothelial cells of cerebral capillaries (at protein level).

The protein resides in the cytoplasm. It is found in the cytoskeleton. Its subcellular location is the spindle. The protein localises to the spindle pole. It localises to the cleavage furrow. Component of a multiprotein complex required for the assembly of the RNA endonuclease module of the integrator complex. Associates with INTS9 and INTS11 in the cytoplasm, stabilizing the INTS9-INTS11 heterodimer and blocking the active site of INTS11. BRAT1 then joins the complex and plugs the active site of INTS11, leading to WDR73 release and nuclear import of INTS9 and INTS11. This is Integrator complex assembly factor WDR73 from Homo sapiens (Human).